We begin with the raw amino-acid sequence, 201 residues long: Segregation and condensation protein B (201 aa).

This sequence belongs to the ScpB family. Homodimer. Homodimerization may be required to stabilize the binding of ScpA to the Smc head domains. Component of a cohesin-like complex composed of ScpA, ScpB and the Smc homodimer, in which ScpA and ScpB bind to the head domain of Smc. The presence of the three proteins is required for the association of the complex with DNA.

The protein localises to the cytoplasm. Functionally, participates in chromosomal partition during cell division. May act via the formation of a condensin-like complex containing Smc and ScpA that pull DNA away from mid-cell into both cell halves. The protein is Segregation and condensation protein B of Enterococcus faecalis (strain ATCC 700802 / V583).